A 248-amino-acid polypeptide reads, in one-letter code: GPN-loop GTPase PAB0955 (248 aa).

Residue 10 to 15 (GSGKTT) coordinates GTP. The Gly-Pro-Asn (GPN)-loop; involved in dimer interface motif lies at 65 to 67 (GPN). GTP-binding positions include 165 to 168 (NKVD) and Ala-224.

This sequence belongs to the GPN-loop GTPase family. As to quaternary structure, homodimer. Interacts with DNA topoisomerase VI subunit B (top6B), DNA primase DnaG and RF-C.

Its function is as follows. Small GTPase that may be involved in genome maintenance. Has weak intrinsic GTPase activity but displays no ATPase activity. The chain is GPN-loop GTPase PAB0955 from Pyrococcus abyssi (strain GE5 / Orsay).